A 1202-amino-acid chain; its full sequence is Nitric oxide synthase 3 (1202 aa).

The tract at residues 1-70 (MGNLKSVGQE…PPDGPKFPRV (70 aa)) is disordered. Gly-2 carries N-myristoyl glycine lipidation. 2 S-palmitoyl cysteine lipidation sites follow: Cys-15 and Cys-26. The span at 15-27 (CGLGLGLGLGLCG) shows a compositional bias: gly residues. A compositionally biased stretch (pro residues) spans 33–65 (SPAPEPSQAPVPPSPTRPAPDHSPPLTRPPDGP). 2 residues coordinate Zn(2+): Cys-93 and Cys-98. The interval 97-485 (RCLGSLVFPR…PDPWKGSAAK (389 aa)) is interaction with NOSIP. Ser-101 contributes to the (6R)-L-erythro-5,6,7,8-tetrahydrobiopterin binding site. Position 183 (Cys-183) interacts with heme b. L-arginine is bound by residues Gln-246, Trp-355, Tyr-356, and Glu-360. Residues Ala-445, Trp-446, and Phe-459 each coordinate (6R)-L-erythro-5,6,7,8-tetrahydrobiopterin. A heme b-binding site is contributed by Tyr-474. The calmodulin-binding stretch occupies residues 489–509 (ITRKKTFKEVANAVKISASLM). Phosphothreonine; by AMPK is present on Thr-494. The Flavodoxin-like domain occupies 519-702 (ATILYGSETG…AFRGWAQAAF (184 aa)). FMN is bound by residues Ser-525, Glu-526, Thr-527, Arg-529, Ser-571, and Thr-572. Residues Ser-614, Ser-632, and Ser-637 each carry the phosphoserine modification. The FMN site is built by Ser-653, Cys-660, Glu-686, and Gln-690. Positions 755-1001 (RKMFQATILS…IRGAPSFRLP (247 aa)) constitute an FAD-binding FR-type domain. Arg-775 is an NADP(+) binding site. Residue His-797 coordinates FAD. Residues 817–843 (EDPPPSTEPVAVEQLEKGSPGGPPPGW) are disordered. Residue Ser-835 is modified to Phosphoserine. Arg-937, Tyr-939, Ser-940, Thr-955, Ala-957, Tyr-961, Val-974, Cys-975, and Ser-976 together coordinate FAD. NADP(+)-binding residues include Thr-1015, Arg-1048, Ser-1077, Arg-1078, Lys-1084, Tyr-1086, and Gln-1088. Phosphothreonine is present on Thr-1174. Ser-1176 carries the post-translational modification Phosphoserine; by AMPK. The residue at position 1178 (Ser-1178) is a Phosphoserine.

It belongs to the NOS family. Homodimer. Interacts with NOSIP and NOSTRIN. Interacts with HSP90AB1. Forms a complex with ASL, ASS1 and SLC7A1; the complex regulates cell-autonomous L-arginine synthesis and citrulline recycling while channeling extracellular L-arginine to nitric oxide synthesis pathway. Heme b serves as cofactor. The cofactor is FAD. Requires FMN as cofactor. (6R)-L-erythro-5,6,7,8-tetrahydrobiopterin is required as a cofactor. In terms of processing, phosphorylation by AMPK at Ser-1176 in the presence of Ca(2+)-calmodulin (CaM) activates activity. In absence of Ca(2+)-calmodulin, AMPK also phosphorylates Thr-494, resulting in inhibition of activity. As to expression, expressed constitutively by vascular endothelium. Detected in alveolar and serosal epithelial cells as well as in endothelial cells in one day old rat. In adult lung, detected in rare endothelial cells.

The protein localises to the membrane. It is found in the caveola. Its subcellular location is the cytoplasm. It localises to the cytoskeleton. The protein resides in the golgi apparatus. The protein localises to the cell membrane. The enzyme catalyses 2 L-arginine + 3 NADPH + 4 O2 + H(+) = 2 L-citrulline + 2 nitric oxide + 3 NADP(+) + 4 H2O. Stimulated by calcium/calmodulin. Inhibited by NOSIP and NOSTRIN. Its function is as follows. Produces nitric oxide (NO) which is implicated in vascular smooth muscle relaxation through a cGMP-mediated signal transduction pathway. NO mediates vascular endothelial growth factor (VEGF)-induced angiogenesis in coronary vessels and promotes blood clotting through the activation of platelets. This chain is Nitric oxide synthase 3, found in Rattus norvegicus (Rat).